The chain runs to 181 residues: Large ribosomal subunit protein uL30 (181 aa).

It belongs to the universal ribosomal protein uL30 family. As to quaternary structure, part of the 50S ribosomal subunit.

In Hyperthermus butylicus (strain DSM 5456 / JCM 9403 / PLM1-5), this protein is Large ribosomal subunit protein uL30.